The primary structure comprises 260 residues: Small ribosomal subunit protein uS2 (260 aa).

The segment covering arginine 228–methionine 240 has biased composition (basic and acidic residues). The segment at arginine 228 to glutamate 260 is disordered. Over residues lysine 241–glutamate 260 the composition is skewed to low complexity.

It belongs to the universal ribosomal protein uS2 family.

The chain is Small ribosomal subunit protein uS2 from Oleidesulfovibrio alaskensis (strain ATCC BAA-1058 / DSM 17464 / G20) (Desulfovibrio alaskensis).